The primary structure comprises 946 residues: DNA ligase 4 (946 aa).

Residues Glu-295, Lys-297, Arg-302, Glu-355, Phe-397, Glu-457, Lys-462, Lys-479, and Lys-481 each contribute to the ATP site. Residue Lys-297 is the N6-AMP-lysine intermediate of the active site. Mg(2+) is bound at residue Glu-355. Glu-457 is a binding site for Mg(2+). BRCT domains lie at 688–787 (HRSD…PSHC) and 845–945 (VPHF…NYRL).

Belongs to the ATP-dependent DNA ligase family. It depends on Mg(2+) as a cofactor.

The protein resides in the nucleus. The enzyme catalyses ATP + (deoxyribonucleotide)n-3'-hydroxyl + 5'-phospho-(deoxyribonucleotide)m = (deoxyribonucleotide)n+m + AMP + diphosphate.. Functionally, DNA ligase involved in DNA non-homologous end joining (NHEJ); required for double-strand break (DSB) repair. The polypeptide is DNA ligase 4 (LIG4) (Candida glabrata (strain ATCC 2001 / BCRC 20586 / JCM 3761 / NBRC 0622 / NRRL Y-65 / CBS 138) (Yeast)).